Reading from the N-terminus, the 29-residue chain is Kalata-B11 (29 aa).

The cyclopeptide (Gly-Asp) cross-link spans 1–29; sequence GLPVCGETCFGGTCNTPGCSCTDPICTRD. 3 cysteine pairs are disulfide-bonded: Cys5–Cys19, Cys9–Cys21, and Cys14–Cys26.

Post-translationally, this is a cyclic peptide.

Its function is as follows. Probably participates in a plant defense mechanism. This chain is Kalata-B11, found in Oldenlandia affinis.